We begin with the raw amino-acid sequence, 70 residues long: DNA-directed RNA polymerase subunit omega (70 aa).

It belongs to the RNA polymerase subunit omega family. In terms of assembly, the RNAP catalytic core consists of 2 alpha, 1 beta, 1 beta' and 1 omega subunit. When a sigma factor is associated with the core the holoenzyme is formed, which can initiate transcription.

The enzyme catalyses RNA(n) + a ribonucleoside 5'-triphosphate = RNA(n+1) + diphosphate. Its function is as follows. Promotes RNA polymerase assembly. Latches the N- and C-terminal regions of the beta' subunit thereby facilitating its interaction with the beta and alpha subunits. The polypeptide is DNA-directed RNA polymerase subunit omega (Staphylococcus haemolyticus (strain JCSC1435)).